The following is a 358-amino-acid chain: Nuclear receptor subfamily 1 group I member 3 (358 aa).

Residues 18-93 (PRNCVVCGDR…VGMRKDMILS (76 aa)) constitute a DNA-binding region (nuclear receptor). The segment at 21-41 (CVVCGDRATGYHFHALTCEGC) adopts an NR C4-type zinc-finger fold. The residue at position 48 (Thr48) is a Phosphothreonine; by PKC. The segment at 57-81 (CPFAGRCEVSKAQRRHCPACRLQKC) adopts an NR C4-type zinc-finger fold. Residues 119-358 (QQKELIQTLL…MMPLLGEICS (240 aa)) form the NR LBD domain.

This sequence belongs to the nuclear hormone receptor family. NR1 subfamily. Heterodimer of NR1I3 and RXR. Interacts with PSMC4. Interacts with ECT2. Directly interacts with DNAJC7; this complex may also include HSP90. Interacts with CRY1. Interacts with CRY2 in a ligand-dependent manner. Post-translationally, phosphorylated at Thr-48 by PKC, dephosphorylation of Thr-48 is required for nuclear translocation and activation.

The protein resides in the nucleus. It localises to the cytoplasm. It is found in the cytoskeleton. In terms of biological role, binds and transactivates the retinoic acid response elements that control expression of the retinoic acid receptor beta 2 and alcohol dehydrogenase 3 genes. Transactivates both the phenobarbital responsive element module of the human CYP2B6 gene and the CYP3A4 xenobiotic response element. In Rattus norvegicus (Rat), this protein is Nuclear receptor subfamily 1 group I member 3 (Nr1i3).